The following is a 197-amino-acid chain: MDSSIGIKGRNFAIVAADTKISSSILVVKENHEKFQVIKDRIVMAMTGNQGDAFRTMLYVSESALYEEIQNGIELSPSVLAHMIQNKVHESLRRRQLDISSIVAGRGPEKYDLWSVDKYGAISSVPFCASGYAAYFVYGILDREYSEDITIDAALSIMQKCVNLLKERLMINLEGFMVKIVTDDGILTRTLVPEIKG.

It belongs to the peptidase T1B family. In terms of assembly, the 26S proteasome consists of a 20S proteasome core and two 19S regulatory subunits. The 20S proteasome core is composed of 28 subunits that are arranged in four stacked rings, resulting in a barrel-shaped structure. The two end rings are each formed by seven alpha subunits, and the two central rings are each formed by seven beta subunits. The catalytic chamber with the active sites is on the inside of the barrel.

The protein localises to the cytoplasm. Its subcellular location is the nucleus. Non-catalytic component of the proteasome which degrades poly-ubiquitinated proteins in the cytoplasm and in the nucleus. It is essential for the regulated turnover of proteins and for the removal of misfolded proteins. The proteasome is a multicatalytic proteinase complex that is characterized by its ability to cleave peptides with Arg, Phe, Tyr, Leu, and Glu adjacent to the leaving group at neutral or slightly basic pH. It has an ATP-dependent proteolytic activity. The polypeptide is Probable proteasome subunit beta type-4 (PRE1) (Encephalitozoon cuniculi (strain GB-M1) (Microsporidian parasite)).